The chain runs to 317 residues: Epidermal growth factor-like protein (317 aa).

An N-terminal signal peptide occupies residues 1–23; sequence MDFKIFLFLTAIFMIVGVTVSTA. A may be required for E.coli agglutination activity region spans residues 24–33; it reads TTNPTAPRAY. EGF-like domains lie at 93-128, 130-161, 163-195, 208-243, 245-280, and 282-315; these read HCTP…GKCI, VCPG…RYCT, GCTR…GTCQ, ACEP…KVCA, KCSQ…NRCI, and YCAA…NVCV. Intrachain disulfides connect C98/C107, C102/C113, C115/C127, C131/C140, C135/C145, C147/C160, C164/C174, C168/C180, C182/C194, C213/C222, C217/C228, C230/C242, C246/C255, C250/C261, C263/C279, C283/C292, C287/C298, and C300/C314.

The protein localises to the secreted. Its function is as follows. Binds to lipopolysaccharides (LPS) present on the cell walls of Gram-negative bacteria, behaving as a pattern recognition receptor (PRR). Induces bacterial aggregation and enhances their subsequent clearance by the innate immune response. Binds to the inner core oligosaccharides region of rough-type bacterial LPS. Displays activity against the Gram-negative bacterium E.coli. Does not display any activity against the Gram-positive bacterium S.aureus or the fungi C.albicans. The protein is Epidermal growth factor-like protein of Holotrichia diomphalia (Korean black chafer).